A 181-amino-acid polypeptide reads, in one-letter code: ATP synthase subunit b (181 aa).

The helical transmembrane segment at 23-43 (FIHIPTFIYTALNLVILYFIL) threads the bilayer.

Belongs to the ATPase B chain family. As to quaternary structure, F-type ATPases have 2 components, F(1) - the catalytic core - and F(0) - the membrane proton channel. F(1) has five subunits: alpha(3), beta(3), gamma(1), delta(1), epsilon(1). F(0) has three main subunits: a(1), b(2) and c(10-14). The alpha and beta chains form an alternating ring which encloses part of the gamma chain. F(1) is attached to F(0) by a central stalk formed by the gamma and epsilon chains, while a peripheral stalk is formed by the delta and b chains.

The protein localises to the cell membrane. F(1)F(0) ATP synthase produces ATP from ADP in the presence of a proton or sodium gradient. F-type ATPases consist of two structural domains, F(1) containing the extramembraneous catalytic core and F(0) containing the membrane proton channel, linked together by a central stalk and a peripheral stalk. During catalysis, ATP synthesis in the catalytic domain of F(1) is coupled via a rotary mechanism of the central stalk subunits to proton translocation. Functionally, component of the F(0) channel, it forms part of the peripheral stalk, linking F(1) to F(0). This Acetivibrio thermocellus (strain ATCC 27405 / DSM 1237 / JCM 9322 / NBRC 103400 / NCIMB 10682 / NRRL B-4536 / VPI 7372) (Clostridium thermocellum) protein is ATP synthase subunit b.